The primary structure comprises 252 residues: Probable transcriptional regulatory protein A1E_02520 (252 aa).

It belongs to the TACO1 family.

The protein localises to the cytoplasm. This is Probable transcriptional regulatory protein A1E_02520 from Rickettsia canadensis (strain McKiel).